The following is a 993-amino-acid chain: Isoleucine--tRNA ligase, mitochondrial (993 aa).

A mitochondrion-targeting transit peptide spans 1 to 29 (SLWGTPRLPCSPGWQGATKRLLVRSVSGA). Residue Lys55 is modified to N6-acetyllysine; alternate. Lys55 carries the N6-succinyllysine; alternate modification. The 'HIGH' region motif lies at 97 to 107 (PYANGDPHVGH). Lys170 bears the N6-acetyllysine mark. Lys175 bears the N6-succinyllysine mark. At Lys214 the chain carries N6-acetyllysine. Lys222 carries the post-translational modification N6-acetyllysine; alternate. Position 222 is an N6-succinyllysine; alternate (Lys222). N6-succinyllysine is present on residues Lys460 and Lys481. The ATP site is built by Lys645 and Lys648. A 'KMSKS' region motif is present at residues 645–649 (KMSKS). Lys706 is subject to N6-acetyllysine. N6-acetyllysine; alternate occurs at positions 756 and 762. N6-succinyllysine; alternate is present on residues Lys756 and Lys762.

This sequence belongs to the class-I aminoacyl-tRNA synthetase family.

The protein resides in the mitochondrion matrix. The enzyme catalyses tRNA(Ile) + L-isoleucine + ATP = L-isoleucyl-tRNA(Ile) + AMP + diphosphate. Its function is as follows. Aminoacyl-tRNA synthetase that catalyzes the specific attachment of isoleucine to its cognate tRNA (tRNA(Ile)). The sequence is that of Isoleucine--tRNA ligase, mitochondrial (IARS2) from Macaca fascicularis (Crab-eating macaque).